The sequence spans 329 residues: Bifunctional muramidase/DL-endopeptidase CwlT (329 aa).

The N-terminal stretch at 1 to 29 is a signal peptide; the sequence is MISKKVVLPLVFSAPFIFFFVLCIVVVMT. A muramidase region spans residues 59–192; that stretch reads RFRAVFEKYA…SYVDHVMRYV (134 aa). The NlpC/P60 domain occupies 206–329; that stretch reads MDFYETVMKE…DHLVSFGRIK (124 aa). The Nucleophile role is filled by Cys-237. The active-site Proton acceptor is His-290. Asn-302 is an active-site residue.

This sequence belongs to the peptidase C40 family.

It is found in the secreted. The catalysed reaction is Hydrolysis of (1-&gt;4)-beta-linkages between N-acetylmuramic acid and N-acetyl-D-glucosamine residues in a peptidoglycan and between N-acetyl-D-glucosamine residues in chitodextrins.. Exhibits both muramidase and DL-endopeptidase activities. The N-terminal region acts as a N-acetylmuramidase, which cleaves the bond between N-acetylmuramic acid and N-acetyl-D-glucosamine (MurNAc-GlcNAc) in peptidoglycan. The C-terminal region acts as a DL-endopeptidase that cleaves the bond between D-gamma-glutamate and meso-diaminopimelic acid. Cannot degrade purified B.anthracis peptidoglycan, which differ from those of B.subtilis. CwlT is required for ICEBs1 conjugation: the muramidase activity is essential, whereas the peptidase activity is partially dispensable for transfer of ICEBs1. The sequence is that of Bifunctional muramidase/DL-endopeptidase CwlT from Bacillus subtilis (strain 168).